Consider the following 374-residue polypeptide: Putative glutamate--cysteine ligase 2 (374 aa).

Belongs to the glutamate--cysteine ligase type 2 family. YbdK subfamily.

The enzyme catalyses L-cysteine + L-glutamate + ATP = gamma-L-glutamyl-L-cysteine + ADP + phosphate + H(+). Functionally, ATP-dependent carboxylate-amine ligase which exhibits weak glutamate--cysteine ligase activity. The protein is Putative glutamate--cysteine ligase 2 of Leptothrix cholodnii (strain ATCC 51168 / LMG 8142 / SP-6) (Leptothrix discophora (strain SP-6)).